The chain runs to 312 residues: Protein-methionine-sulfoxide reductase catalytic subunit MsrP (312 aa).

The tat-type signal signal peptide spans 1–45; it reads MPVYRPPRIAASEITPERFFLDRRSFLAAAGGLVLGGTGMAHAAA. Mo-molybdopterin contacts are provided by residues N69, 72-73, C126, T161, N211, R216, and 227-229; these read YE and GIK.

This sequence belongs to the MsrP family. In terms of assembly, heterodimer of a catalytic subunit (MsrP) and a heme-binding subunit (MsrQ). Mo-molybdopterin is required as a cofactor. Predicted to be exported by the Tat system. The position of the signal peptide cleavage has not been experimentally proven.

The protein resides in the periplasm. The catalysed reaction is L-methionyl-[protein] + a quinone + H2O = L-methionyl-(S)-S-oxide-[protein] + a quinol. The enzyme catalyses L-methionyl-[protein] + a quinone + H2O = L-methionyl-(R)-S-oxide-[protein] + a quinol. Functionally, part of the MsrPQ system that repairs oxidized periplasmic proteins containing methionine sulfoxide residues (Met-O), using respiratory chain electrons. Thus protects these proteins from oxidative-stress damage caused by reactive species of oxygen and chlorine generated by the host defense mechanisms. MsrPQ is essential for the maintenance of envelope integrity under bleach stress, rescuing a wide series of structurally unrelated periplasmic proteins from methionine oxidation. The catalytic subunit MsrP is non-stereospecific, being able to reduce both (R-) and (S-) diastereoisomers of methionine sulfoxide. In Sinorhizobium fredii (strain NBRC 101917 / NGR234), this protein is Protein-methionine-sulfoxide reductase catalytic subunit MsrP.